The primary structure comprises 349 residues: MDAIAARALSVVRACVTVTDARVSLDPGVMETLGIAINRYNGLTNHSVSMRPQTQAERNEMFFMCTDMVLAALNVQIGNVSPDYDQALATVGALATTEIPYNVQAMNDIVRITGQMQTFGPSKVQTGPYAGAVEVQQSGRYYVPQGRTRGGYINSNIAEVCMDAGAAGQVNALLAPRRGDAVMIYFVWRPLRIFCDPQGASLESAPGTFVTVDGVNVAAGDVVAWNTIAPVNVGNPGARRSILQFEVLWYTSLDRSLDTVPELAPTLTRCYAYVSPTWHALRAVIFQQMNMQPINPPIFPPTERNEIVAYLLVASLADVYAALRPDFRMNGVVAPVGQINRALVLAAYH.

N-linked (GlcNAc...) asparagine; by host glycosylation is present at Asn45.

Belongs to the orbivirus VP7 family. As to quaternary structure, homotrimer.

The protein resides in the virion. Functionally, major structural core protein; binds to structural protein VP3. Constitutes the surface of the AHSV core. The chain is Core protein VP7 (Segment-7) from Camelus dromedarius (Dromedary).